The primary structure comprises 325 residues: Ribose-phosphate pyrophosphokinase (325 aa).

ATP contacts are provided by residues 45–47 and 104–105; these read NGE and RQ. 2 residues coordinate Mg(2+): H138 and D178. K202 is a catalytic residue. Residues R204, D230, and 234-238 each bind D-ribose 5-phosphate; that span reads DTGGT.

Belongs to the ribose-phosphate pyrophosphokinase family. Class I subfamily. As to quaternary structure, homohexamer. Requires Mg(2+) as cofactor.

The protein resides in the cytoplasm. It catalyses the reaction D-ribose 5-phosphate + ATP = 5-phospho-alpha-D-ribose 1-diphosphate + AMP + H(+). It functions in the pathway metabolic intermediate biosynthesis; 5-phospho-alpha-D-ribose 1-diphosphate biosynthesis; 5-phospho-alpha-D-ribose 1-diphosphate from D-ribose 5-phosphate (route I): step 1/1. Involved in the biosynthesis of the central metabolite phospho-alpha-D-ribosyl-1-pyrophosphate (PRPP) via the transfer of pyrophosphoryl group from ATP to 1-hydroxyl of ribose-5-phosphate (Rib-5-P). This is Ribose-phosphate pyrophosphokinase from Corynebacterium efficiens (strain DSM 44549 / YS-314 / AJ 12310 / JCM 11189 / NBRC 100395).